The primary structure comprises 418 residues: Odorant receptor 13a (418 aa).

The Cytoplasmic portion of the chain corresponds to 1–38 (MFYSYPYKALSFPIQCVWLKLNGSWPLTESSRPWRSQS). Residues 39-59 (LLATAYIVWAWYVIASVGITI) form a helical membrane-spanning segment. Over 60 to 70 (SYQTAFLLNNL) the chain is Extracellular. The N-linked (GlcNAc...) asparagine glycan is linked to asparagine 69. Residues 71–91 (SDIIITTENCCTTFMGVLNFV) form a helical membrane-spanning segment. The Cytoplasmic segment spans residues 92 to 140 (RLIHLRLNQRKFRQLIENFSYEIWIPNSSKNNVAAECRRRMVTFSIMTS). Residues 141–161 (LLACLIIMYCVLPLVEIFFGP) traverse the membrane as a helical segment. Over 162 to 195 (AFDAQNKPFPYKMIFPYDAQSSWIRYVMTYIFTS) the chain is Extracellular. Residues 196 to 216 (YAGICVVTTLFAEDTILGFFI) traverse the membrane as a helical segment. At 217 to 273 (TYTCGQFHLLHQRIAGLFAGSNAELAESIQLERLKRIVEKHNNIISFAKRLEDFFNP) the chain is on the cytoplasmic side. The helical transmembrane segment at 274–294 (ILLANLMISSVLICMVGFQIV) threads the bilayer. The Extracellular portion of the chain corresponds to 295–299 (TGKNM). A helical membrane pass occupies residues 300–320 (FIGDYVKFIIYISSALSQLYV). Residues 321-385 (LCENGDALIK…PVRITAFKFS (65 aa)) lie on the Cytoplasmic side of the membrane. The helical transmembrane segment at 386 to 406 (TLSLQSFTAILSTSISYFTLL) threads the bilayer. Over 407–418 (RSVYFDDEKKLD) the chain is Extracellular.

Belongs to the insect chemoreceptor superfamily. Heteromeric odorant receptor channel (TC 1.A.69) family. Or1a subfamily. As to quaternary structure, interacts with Orco. Complexes exist early in the endomembrane system in olfactory sensory neurons (OSNs), coupling these complexes to the conserved ciliary trafficking pathway. In terms of tissue distribution, expressed in olfactory sensory neurons in the antenna.

It localises to the cell membrane. In terms of biological role, odorant receptor which mediates acceptance or avoidance behavior, depending on its substrates. The odorant receptor repertoire encodes a large collection of odor stimuli that vary widely in identity, intensity, and duration. May form a complex with Orco to form odorant-sensing units, providing sensitive and prolonged odorant signaling and calcium permeability. Involved in the behavioral responses to octanol, nonanol, and pentyl acetate. In Drosophila melanogaster (Fruit fly), this protein is Odorant receptor 13a (Or13a).